A 311-amino-acid chain; its full sequence is MRGAVWAARRRAGQQWPRSPGPGPGPPPPPPLLLLLLLLLGGASAQYSSDLCSWKGSGLTREARSKEVEQVYLRCSAGSVEWMYPTGALIVNLRPNTFSPAQNLTVCIKPFRDSSGANIYLEKTGELRLLVRDIRGEPGQVQCFSLEQGGLFVEATPQQDISRRTTGFQYELMSGQRGLDLHVLSAPCRPCSDTEVLLAICTSDFVVRGFIEDVTHVPEQQVSVIYLRVNRLHRQKSRVFQPAPEDSGHWLGHVTTLLQCGVRPGHGEFLFTGHVHFGEAQLGCAPRFSDFQRMYRKAEEMGINPCEINME.

An N-terminal signal peptide occupies residues Met-1–Ala-45. The cysteines at positions 52 and 75 are disulfide-linked. An N-linked (GlcNAc...) asparagine glycan is attached at Asn-103. Disulfide bonds link Cys-107/Cys-143, Cys-188/Cys-260, Cys-191/Cys-284, and Cys-201/Cys-306.

This sequence belongs to the meteorin family. In terms of processing, N-glycosylated. Highly expressed in subcutaneous adipose tissue.

The protein resides in the secreted. Functionally, hormone induced following exercise or cold exposure that promotes energy expenditure. Induced either in the skeletal muscle after exercise or in adipose tissue following cold exposure and is present in the circulation. Able to stimulate energy expenditure associated with the browning of the white fat depots and improves glucose tolerance. Does not promote an increase in a thermogenic gene program via direct action on adipocytes, but acts by stimulating several immune cell subtypes to enter the adipose tissue and activate their prothermogenic actions. Stimulates an eosinophil-dependent increase in IL4 expression and promotes alternative activation of adipose tissue macrophages, which are required for the increased expression of the thermogenic and anti-inflammatory gene programs in fat. Required for some cold-induced thermogenic responses, suggesting a role in metabolic adaptations to cold temperatures. The polypeptide is Meteorin-like protein (Metrnl) (Mus musculus (Mouse)).